The chain runs to 129 residues: Glycine cleavage system H protein (129 aa).

The Lipoyl-binding domain maps to Ile-24–Gln-106. Lys-65 is modified (N6-lipoyllysine).

This sequence belongs to the GcvH family. The glycine cleavage system is composed of four proteins: P, T, L and H. It depends on (R)-lipoate as a cofactor.

The glycine cleavage system catalyzes the degradation of glycine. The H protein shuttles the methylamine group of glycine from the P protein to the T protein. In Synechococcus elongatus (strain ATCC 33912 / PCC 7942 / FACHB-805) (Anacystis nidulans R2), this protein is Glycine cleavage system H protein.